Here is a 193-residue protein sequence, read N- to C-terminus: Putative manganese efflux pump MntP (193 aa).

6 consecutive transmembrane segments (helical) span residues 6–26 (VVFV…GIAC), 39–59 (VAGT…YAGL), 61–81 (IADV…TVIG), 106–126 (LGLL…GLTF), 132–152 (NIGL…YLGF), and 165–185 (WVGI…LAEH).

The protein belongs to the MntP (TC 9.B.29) family.

It is found in the cell membrane. Its function is as follows. Probably functions as a manganese efflux pump. The polypeptide is Putative manganese efflux pump MntP (Dehalococcoides mccartyi (strain ATCC BAA-2266 / KCTC 15142 / 195) (Dehalococcoides ethenogenes (strain 195))).